The following is a 463-amino-acid chain: Lactaldehyde dehydrogenase (463 aa).

220-225 (GSSKVG) contributes to the NAD(+) binding site. Catalysis depends on residues Glu240 and Cys274.

This sequence belongs to the aldehyde dehydrogenase family. As to quaternary structure, homotetramer.

The enzyme catalyses (S)-lactaldehyde + NAD(+) + H2O = (S)-lactate + NADH + 2 H(+). Its pathway is cofactor biosynthesis; coenzyme F420 biosynthesis. In terms of biological role, involved in F420 biosynthesis through the oxidation of lactaldehyde to lactate. The substrate preference order is propionaldehyde &gt; DL-lactaldehyde, DL-glyceraldehyde &gt; crotonaldehyde &gt; glycolaldehyde &gt; acetaldehyde, acrolein &gt; formaldehyde. No activity was observed towards methylglyoxal or glyceraldehyde-3-phosphate. Has a preference for NAD over NADP. The chain is Lactaldehyde dehydrogenase from Methanocaldococcus jannaschii (strain ATCC 43067 / DSM 2661 / JAL-1 / JCM 10045 / NBRC 100440) (Methanococcus jannaschii).